Reading from the N-terminus, the 234-residue chain is Proteasome subunit beta (234 aa).

The disordered stretch occupies residues 1-35 (MNPDLNMNPHDSGRTDPYAPELGEIATDEGDGENV). A propeptide spans 1–39 (MNPDLNMNPHDSGRTDPYAPELGEIATDEGDGENVTKTG) (removed in mature form; by autocatalysis). The active-site Nucleophile is Thr40.

It belongs to the peptidase T1B family. In terms of assembly, the 20S proteasome core is composed of 14 alpha and 14 beta subunits that assemble into four stacked heptameric rings, resulting in a barrel-shaped structure. The two inner rings, each composed of seven catalytic beta subunits, are sandwiched by two outer rings, each composed of seven alpha subunits. The catalytic chamber with the active sites is on the inside of the barrel. Has a gated structure, the ends of the cylinder being occluded by the N-termini of the alpha-subunits. Is capped at one or both ends by the proteasome regulatory ATPase, PAN.

It is found in the cytoplasm. It catalyses the reaction Cleavage of peptide bonds with very broad specificity.. With respect to regulation, the formation of the proteasomal ATPase PAN-20S proteasome complex, via the docking of the C-termini of PAN into the intersubunit pockets in the alpha-rings, triggers opening of the gate for substrate entry. Interconversion between the open-gate and close-gate conformations leads to a dynamic regulation of the 20S proteasome proteolysis activity. Functionally, component of the proteasome core, a large protease complex with broad specificity involved in protein degradation. This chain is Proteasome subunit beta, found in Halorhabdus utahensis (strain DSM 12940 / JCM 11049 / AX-2).